Here is a 621-residue protein sequence, read N- to C-terminus: ATP-dependent lipid A-core flippase (621 aa).

5 consecutive transmembrane segments (helical) span residues 32 to 52 (IVAALIAIFGVAATESYLAAF), 91 to 111 (VWGTENKIWTVPLFLIILVVI), 192 to 212 (IVLLYLNWQLSLIVVLMFPLL), 286 to 306 (SPFSELIASIALAVVIFIALW), and 312 to 332 (YTTIGEFMAFIVAMLQMYAPI). Positions 33–344 (VAALIAIFGV…LANISIPMQT (312 aa)) constitute an ABC transmembrane type-1 domain. The ABC transporter domain occupies 378–611 (FRNVDVEYRS…NGYYTMLRNI (234 aa)). ATP is bound at residue 410 to 417 (GRSGSGKS).

This sequence belongs to the ABC transporter superfamily. Lipid exporter (TC 3.A.1.106) family. As to quaternary structure, homodimer.

The protein localises to the cell inner membrane. It carries out the reaction ATP + H2O + lipid A-core oligosaccharideSide 1 = ADP + phosphate + lipid A-core oligosaccharideSide 2.. Functionally, involved in lipopolysaccharide (LPS) biosynthesis. Translocates lipid A-core from the inner to the outer leaflet of the inner membrane. Transmembrane domains (TMD) form a pore in the inner membrane and the ATP-binding domain (NBD) is responsible for energy generation. This Neisseria meningitidis serogroup A / serotype 4A (strain DSM 15465 / Z2491) protein is ATP-dependent lipid A-core flippase.